The chain runs to 91 residues: Acylphosphatase (91 aa).

Residues 3-91 (CLRAIVKGKV…ANYSDFRIKH (89 aa)) enclose the Acylphosphatase-like domain. Residues Arg-18 and Asn-36 contribute to the active site.

The protein belongs to the acylphosphatase family.

It carries out the reaction an acyl phosphate + H2O = a carboxylate + phosphate + H(+). The chain is Acylphosphatase (acyP) from Dehalococcoides mccartyi (strain ATCC BAA-2100 / JCM 16839 / KCTC 5957 / BAV1).